Consider the following 229-residue polypeptide: Cytochrome c oxidase subunit 2 (229 aa).

The Mitochondrial intermembrane portion of the chain corresponds to 1-26 (MSTWANLGLQDSASPLMEQLIFFHDH). The chain crosses the membrane as a helical span at residues 27–48 (ALLILVMITVLVGYLMFMLFFN). Residues 49–62 (SYVNRFLLHGQLIE) are Mitochondrial matrix-facing. A helical transmembrane segment spans residues 63-82 (MIWTILPAIILLFIAMPSLR). The Mitochondrial intermembrane segment spans residues 83 to 229 (LLYLLDEINE…IKWISNSVNS (147 aa)). 6 residues coordinate Cu cation: H161, C196, E198, C200, H204, and M207. A Mg(2+)-binding site is contributed by E198.

It belongs to the cytochrome c oxidase subunit 2 family. In terms of assembly, component of the cytochrome c oxidase (complex IV, CIV), a multisubunit enzyme composed of a catalytic core of 3 subunits and several supernumerary subunits. The complex exists as a monomer or a dimer and forms supercomplexes (SCs) in the inner mitochondrial membrane with ubiquinol-cytochrome c oxidoreductase (cytochrome b-c1 complex, complex III, CIII). Cu cation serves as cofactor.

The protein localises to the mitochondrion inner membrane. The enzyme catalyses 4 Fe(II)-[cytochrome c] + O2 + 8 H(+)(in) = 4 Fe(III)-[cytochrome c] + 2 H2O + 4 H(+)(out). Its function is as follows. Component of the cytochrome c oxidase, the last enzyme in the mitochondrial electron transport chain which drives oxidative phosphorylation. The respiratory chain contains 3 multisubunit complexes succinate dehydrogenase (complex II, CII), ubiquinol-cytochrome c oxidoreductase (cytochrome b-c1 complex, complex III, CIII) and cytochrome c oxidase (complex IV, CIV), that cooperate to transfer electrons derived from NADH and succinate to molecular oxygen, creating an electrochemical gradient over the inner membrane that drives transmembrane transport and the ATP synthase. Cytochrome c oxidase is the component of the respiratory chain that catalyzes the reduction of oxygen to water. Electrons originating from reduced cytochrome c in the intermembrane space (IMS) are transferred via the dinuclear copper A center (CU(A)) of subunit 2 and heme A of subunit 1 to the active site in subunit 1, a binuclear center (BNC) formed by heme A3 and copper B (CU(B)). The BNC reduces molecular oxygen to 2 water molecules using 4 electrons from cytochrome c in the IMS and 4 protons from the mitochondrial matrix. This is Cytochrome c oxidase subunit 2 (mt:CoII) from Drosophila miranda (Fruit fly).